Reading from the N-terminus, the 141-residue chain is VLSPADKTNVKAAWGKVGAHAGZYGAEALERMFLSFPTTKTYFPHFDLSHGSAZVKGHGKKVAKALSBAVZHLDDMPNALSALSBLHAHKLRVBPVBFKLLNHCLLVTLAABFPSZFTPAVHASVDKFLASVSTVLTSKYR.

A Globin domain is found at 1 to 141 (VLSPADKTNV…VSTVLTSKYR (141 aa)). Residue His58 participates in O2 binding. A heme b-binding site is contributed by His87.

It belongs to the globin family. Heterotetramer of two alpha chains and two beta chains. Red blood cells.

In terms of biological role, involved in oxygen transport from the lung to the various peripheral tissues. The protein is Hemoglobin subunit alpha-3 of Pan troglodytes (Chimpanzee).